Reading from the N-terminus, the 347-residue chain is Ornithine carbamoyltransferase (347 aa).

Carbamoyl phosphate is bound by residues 56–59 (STRT), glutamine 83, arginine 107, and 134–137 (HPTQ). L-ornithine-binding positions include asparagine 168, aspartate 232, and 236 to 237 (SM). Carbamoyl phosphate contacts are provided by residues 274 to 275 (CL) and arginine 320.

Belongs to the aspartate/ornithine carbamoyltransferase superfamily. OTCase family.

Its subcellular location is the cytoplasm. The enzyme catalyses carbamoyl phosphate + L-ornithine = L-citrulline + phosphate + H(+). Its function is as follows. Reversibly catalyzes the transfer of the carbamoyl group from carbamoyl phosphate (CP) to the N(epsilon) atom of ornithine (ORN) to produce L-citrulline. This is Ornithine carbamoyltransferase from Blochmanniella floridana.